Here is a 406-residue protein sequence, read N- to C-terminus: ESX-5 secretion system protein EccE5 (406 aa).

2 consecutive transmembrane segments (helical) span residues 9 to 29 (LALSWPRVTAVFLVDVLILAV) and 43 to 63 (VAWWVGVGVAAVVTLLSVVSY).

Belongs to the EccE family. As to quaternary structure, part of the ESX-5 / type VII secretion system (T7SS), which is composed of cytosolic and membrane components. The ESX-5 membrane complex is composed of EccB5, EccC5, EccD5 and EccE5.

It is found in the cell inner membrane. Functionally, part of the ESX-5 specialized secretion system, which is responsible for the secretion of EsxN and a number of PE_PGRS and PPE proteins, including PPE41. This Mycobacterium tuberculosis (strain ATCC 25618 / H37Rv) protein is ESX-5 secretion system protein EccE5.